Reading from the N-terminus, the 175-residue chain is Shikimate kinase (175 aa).

17 to 22 (GAGKST) is a binding site for ATP. Ser-21 lines the Mg(2+) pocket. Asp-39, Arg-63, and Gly-85 together coordinate substrate. ATP is bound at residue Arg-123. Arg-142 lines the substrate pocket. Residue Gln-159 coordinates ATP.

This sequence belongs to the shikimate kinase family. In terms of assembly, monomer. It depends on Mg(2+) as a cofactor.

The protein resides in the cytoplasm. It catalyses the reaction shikimate + ATP = 3-phosphoshikimate + ADP + H(+). The protein operates within metabolic intermediate biosynthesis; chorismate biosynthesis; chorismate from D-erythrose 4-phosphate and phosphoenolpyruvate: step 5/7. Functionally, catalyzes the specific phosphorylation of the 3-hydroxyl group of shikimic acid using ATP as a cosubstrate. The protein is Shikimate kinase of Photobacterium profundum (strain SS9).